Here is a 656-residue protein sequence, read N- to C-terminus: DNA ligase (656 aa).

NAD(+) is bound by residues 32–36 and 81–82; these read DAVYD and SL. Lysine 112 acts as the N6-AMP-lysine intermediate in catalysis. The NAD(+) site is built by arginine 133, glutamate 167, and lysine 306. Zn(2+) is bound by residues cysteine 400, cysteine 403, cysteine 416, and cysteine 421. One can recognise a BRCT domain in the interval 577-656; the sequence is KSSSVFSDKT…ELLKRLKELD (80 aa).

This sequence belongs to the NAD-dependent DNA ligase family. LigA subfamily. Mg(2+) is required as a cofactor. Mn(2+) serves as cofactor.

The catalysed reaction is NAD(+) + (deoxyribonucleotide)n-3'-hydroxyl + 5'-phospho-(deoxyribonucleotide)m = (deoxyribonucleotide)n+m + AMP + beta-nicotinamide D-nucleotide.. Its function is as follows. DNA ligase that catalyzes the formation of phosphodiester linkages between 5'-phosphoryl and 3'-hydroxyl groups in double-stranded DNA using NAD as a coenzyme and as the energy source for the reaction. It is essential for DNA replication and repair of damaged DNA. This Helicobacter pylori (strain J99 / ATCC 700824) (Campylobacter pylori J99) protein is DNA ligase.